We begin with the raw amino-acid sequence, 225 residues long: Proteasome activator 28 (225 aa).

This sequence belongs to the PA28 family. As to quaternary structure, homoheptamer. The homoheptamer associates with the 20S proteasome.

It localises to the nucleus. Its function is as follows. Subunit of the 11S REG (also called PA28) proteasome regulator, a doughnut-shaped homoheptamer which associates with the proteasome. 11S REG-gamma activates preferentially the trypsin-like catalytic subunit of the proteasome. May also be involved in cell cycle regulation. This Dictyostelium discoideum (Social amoeba) protein is Proteasome activator 28 (psmE3).